The following is a 185-amino-acid chain: Elongation factor P (185 aa).

The protein belongs to the elongation factor P family.

Its subcellular location is the cytoplasm. It functions in the pathway protein biosynthesis; polypeptide chain elongation. Its function is as follows. Involved in peptide bond synthesis. Stimulates efficient translation and peptide-bond synthesis on native or reconstituted 70S ribosomes in vitro. Probably functions indirectly by altering the affinity of the ribosome for aminoacyl-tRNA, thus increasing their reactivity as acceptors for peptidyl transferase. The polypeptide is Elongation factor P (Limosilactobacillus reuteri (strain DSM 20016) (Lactobacillus reuteri)).